We begin with the raw amino-acid sequence, 120 residues long: MGKRTPRELRLRRHNRIRKRVFGTPERPRLNVFRSHVHIYAQVIDDTVGHTLVAASTNEKGWSGSPELTKTQEAALVGKLIAERALQAGITKVVFDRGGYKYHGRVKALAEAAREAGLNF.

The protein belongs to the universal ribosomal protein uL18 family. In terms of assembly, part of the 50S ribosomal subunit; part of the 5S rRNA/L5/L18/L25 subcomplex. Contacts the 5S and 23S rRNAs.

This is one of the proteins that bind and probably mediate the attachment of the 5S RNA into the large ribosomal subunit, where it forms part of the central protuberance. This is Large ribosomal subunit protein uL18 from Chloroflexus aurantiacus (strain ATCC 29364 / DSM 637 / Y-400-fl).